The primary structure comprises 37 residues: Large ribosomal subunit protein bL36 (37 aa).

Belongs to the bacterial ribosomal protein bL36 family.

This Mycobacteroides abscessus (strain ATCC 19977 / DSM 44196 / CCUG 20993 / CIP 104536 / JCM 13569 / NCTC 13031 / TMC 1543 / L948) (Mycobacterium abscessus) protein is Large ribosomal subunit protein bL36.